Reading from the N-terminus, the 343-residue chain is Heat-inducible transcription repressor HrcA (343 aa).

This sequence belongs to the HrcA family.

Its function is as follows. Negative regulator of class I heat shock genes (grpE-dnaK-dnaJ and groELS operons). Prevents heat-shock induction of these operons. In Leptospira biflexa serovar Patoc (strain Patoc 1 / Ames), this protein is Heat-inducible transcription repressor HrcA.